A 127-amino-acid chain; its full sequence is Large ribosomal subunit protein bL12 (127 aa).

The protein belongs to the bacterial ribosomal protein bL12 family. As to quaternary structure, homodimer. Part of the ribosomal stalk of the 50S ribosomal subunit. Forms a multimeric L10(L12)X complex, where L10 forms an elongated spine to which 2 to 4 L12 dimers bind in a sequential fashion. Binds GTP-bound translation factors.

Its function is as follows. Forms part of the ribosomal stalk which helps the ribosome interact with GTP-bound translation factors. Is thus essential for accurate translation. This chain is Large ribosomal subunit protein bL12, found in Thiobacillus denitrificans (strain ATCC 25259 / T1).